We begin with the raw amino-acid sequence, 407 residues long: Nicotinate phosphoribosyltransferase (407 aa).

Histidine 228 carries the post-translational modification Phosphohistidine; by autocatalysis.

This sequence belongs to the NAPRTase family. Transiently phosphorylated on a His residue during the reaction cycle. Phosphorylation strongly increases the affinity for substrates and increases the rate of nicotinate D-ribonucleotide production. Dephosphorylation regenerates the low-affinity form of the enzyme, leading to product release.

The enzyme catalyses nicotinate + 5-phospho-alpha-D-ribose 1-diphosphate + ATP + H2O = nicotinate beta-D-ribonucleotide + ADP + phosphate + diphosphate. The protein operates within cofactor biosynthesis; NAD(+) biosynthesis; nicotinate D-ribonucleotide from nicotinate: step 1/1. With respect to regulation, 100-fold more active in the presence of saturating ATP. Its function is as follows. Catalyzes the synthesis of beta-nicotinate D-ribonucleotide from nicotinate and 5-phospho-D-ribose 1-phosphate at the expense of ATP. Functions in the deamidating salvage pathway for production of NAD from nicotinamide. Displays a strict preference for nicotinate over nicotinamide substrate. The polypeptide is Nicotinate phosphoribosyltransferase (Acinetobacter baylyi (strain ATCC 33305 / BD413 / ADP1)).